A 638-amino-acid chain; its full sequence is ATP-dependent zinc metalloprotease FtsH (638 aa).

The Cytoplasmic segment spans residues 1–7 (MRSTYKT). A helical membrane pass occupies residues 8-28 (IGLWVILIVLFVAFYNFFSQG). At 29–102 (NDQVQEPSFT…KYEREEQNSL (74 aa)) the chain is on the periplasmic side. The chain crosses the membrane as a helical span at residues 103 to 123 (WLTILGQWMPVVFLFLFFIFF). Residues 124-638 (MRQLQGGSGK…GLPAMEPKKA (515 aa)) lie on the Cytoplasmic side of the membrane. Residue 195–202 (GSPGTGKT) coordinates ATP. Zn(2+) is bound at residue His417. The active site involves Glu418. 2 residues coordinate Zn(2+): His421 and Asp493. A disordered region spans residues 596–638 (GGQLTRERPPPRVNAPPKATEKKDKRKILDALEGLPAMEPKKA). Residues 614–625 (ATEKKDKRKILD) are compositionally biased toward basic and acidic residues.

It in the central section; belongs to the AAA ATPase family. The protein in the C-terminal section; belongs to the peptidase M41 family. As to quaternary structure, homohexamer. The cofactor is Zn(2+).

The protein localises to the cell inner membrane. In terms of biological role, acts as a processive, ATP-dependent zinc metallopeptidase for both cytoplasmic and membrane proteins. Plays a role in the quality control of integral membrane proteins. This Myxococcus xanthus (strain DK1622) protein is ATP-dependent zinc metalloprotease FtsH.